A 264-amino-acid chain; its full sequence is S-adenosylmethionine decarboxylase proenzyme (264 aa).

The active-site Schiff-base intermediate with substrate; via pyruvic acid is the Ser112. Pyruvic acid (Ser); by autocatalysis is present on Ser112. Residue His117 is the Proton acceptor; for processing activity of the active site. Cys140 (proton donor; for catalytic activity) is an active-site residue.

Belongs to the prokaryotic AdoMetDC family. Type 2 subfamily. As to quaternary structure, heterooctamer of four alpha and four beta chains arranged as a tetramer of alpha/beta heterodimers. Pyruvate serves as cofactor. Is synthesized initially as an inactive proenzyme. Formation of the active enzyme involves a self-maturation process in which the active site pyruvoyl group is generated from an internal serine residue via an autocatalytic post-translational modification. Two non-identical subunits are generated from the proenzyme in this reaction, and the pyruvate is formed at the N-terminus of the alpha chain, which is derived from the carboxyl end of the proenzyme. The post-translation cleavage follows an unusual pathway, termed non-hydrolytic serinolysis, in which the side chain hydroxyl group of the serine supplies its oxygen atom to form the C-terminus of the beta chain, while the remainder of the serine residue undergoes an oxidative deamination to produce ammonia and the pyruvoyl group blocking the N-terminus of the alpha chain.

The catalysed reaction is S-adenosyl-L-methionine + H(+) = S-adenosyl 3-(methylsulfanyl)propylamine + CO2. It functions in the pathway amine and polyamine biosynthesis; S-adenosylmethioninamine biosynthesis; S-adenosylmethioninamine from S-adenosyl-L-methionine: step 1/1. In terms of biological role, catalyzes the decarboxylation of S-adenosylmethionine to S-adenosylmethioninamine (dcAdoMet), the propylamine donor required for the synthesis of the polyamines spermine and spermidine from the diamine putrescine. The protein is S-adenosylmethionine decarboxylase proenzyme of Yersinia pseudotuberculosis serotype I (strain IP32953).